The following is a 319-amino-acid chain: MAPTAAQIKSRARALGFHKVGIARADALDGEAAERLGGWLAAGYAGEMRWMHDPRRRDIQQVLPGVRSVICVALSYNTAQGEPAPGQARISRYALGRDYHKVLGKPLKELARWIEASDPGCRAVAYVDTGPVQEKAWAEAAGLGWIGKNACLITLEYGSWVFLGEILTTLDLEANDPHPNYCGTCTRCLSACPTAALVEPAVVDARKCLAYHTIENRAPELPEAIAEHQHGWVVGCDLCQTCCPFNLRAERWGRYSEVADFAPRDPWNEITLDQLADLSDAEFERWSEGSAIRRVKASGLRRNARSALGASGDSLAQAH.

Asp128 serves as the catalytic Proton donor. Residues 173 to 202 (EANDPHPNYCGTCTRCLSACPTAALVEPAV) enclose the 4Fe-4S ferredoxin-type domain. Cys182, Cys185, Cys188, Cys192, Cys208, Cys236, Cys239, and Cys243 together coordinate [4Fe-4S] cluster.

It belongs to the QueG family. As to quaternary structure, monomer. Cob(II)alamin serves as cofactor. The cofactor is [4Fe-4S] cluster.

The protein localises to the cytoplasm. The enzyme catalyses epoxyqueuosine(34) in tRNA + AH2 = queuosine(34) in tRNA + A + H2O. It functions in the pathway tRNA modification; tRNA-queuosine biosynthesis. In terms of biological role, catalyzes the conversion of epoxyqueuosine (oQ) to queuosine (Q), which is a hypermodified base found in the wobble positions of tRNA(Asp), tRNA(Asn), tRNA(His) and tRNA(Tyr). The chain is Epoxyqueuosine reductase from Gloeobacter violaceus (strain ATCC 29082 / PCC 7421).